The sequence spans 335 residues: DNA-directed RNA polymerase RPB7 homolog (335 aa).

It belongs to the Asfivirus DNA-directed RNA polymerase RPB7 homolog family. In terms of assembly, part of the viral DNA-directed RNA polymerase that consists of 8 polII-like subunits (RPB1, RPB2, RPB3, RPB5, RPB6, RPB7, RPB9, RPB10), a capping enzyme and a termination factor.

It localises to the host cytoplasm. The protein localises to the virion. In terms of biological role, component of the DNA-directed RNA polymerase (RNAP) that catalyzes the transcription in the cytoplasm of viral DNA into RNA using the four ribonucleoside triphosphates as substrates. This is DNA-directed RNA polymerase RPB7 homolog from African swine fever virus (isolate Pig/Kenya/KEN-50/1950) (ASFV).